The following is a 104-amino-acid chain: Protein RnfH (104 aa).

Belongs to the UPF0125 (RnfH) family.

This chain is Protein RnfH, found in Pseudomonas savastanoi pv. phaseolicola (strain 1448A / Race 6) (Pseudomonas syringae pv. phaseolicola (strain 1448A / Race 6)).